The chain runs to 472 residues: MKRGALLVPFVPLALACVDPGDSNHSCASVFSVSSAAAASFCATFTVSAVTETTGVPAALLSNCDYKTKHLSSACSCLGPATAAAPTQTSAVTPTVAPTTLKANAVAPTTEAPAPTKSSTFAGNGGTTCTVTEYAAISSAVASCSNILLSDVYAPPSSTIDLQNLQTGAAVIFAGTTTFGDTPDDDFDPIVISGTDVTITGADGHVIDGNGAAYWDGKGSNGGSSKPDHFIVAKHMYYSRIENLNIQNWPVHCFDIEHTENLIISGITLDNSAGDAPNSASGSKPAAHNSDGFDIKSSTNLTLQNSWVHNQDDCVAVSSGTDIVVDNMYCYGGHGLSIGSIGGKSDNTVDGVTFSNSQVINSSNGCRIKSNSGTTGEVSNIRYENITVSGITDYGIDIQQDYLNGGPTGKPTNGVKIENITFVDVTGTMSDGKDYYILCGDGSCSNFVFENVGITGGSGDSCNYPTDTCLEA.

Positions 1–16 (MKRGALLVPFVPLALA) are cleaved as a signal peptide. The N-linked (GlcNAc...) asparagine glycan is linked to asparagine 24. The cysteines at positions 129 and 144 are disulfide-linked. PbH1 repeat units lie at residues 236-258 (MYYSRIENLNIQNWPVHCFDIEH), 259-297 (TENLIISGITLDNSAGDAPNSASGSKPAAHNSDGFDIKS), and 298-319 (STNLTLQNSWVHNQDDCVAVSS). Residue asparagine 300 is glycosylated (N-linked (GlcNAc...) asparagine). Aspartate 312 serves as the catalytic Proton donor. Cysteine 314 and cysteine 330 are disulfide-bonded. Histidine 334 is an active-site residue. 4 PbH1 repeats span residues 349–370 (VDGVTFSNSQVINSSNGCRIKS), 378–400 (VSNIRYENITVSGITDYGIDIQQ), 412–433 (TNGVKIENITFVDVTGTMSDGK), and 444–467 (CSNFVFENVGITGGSGDSCNYPTD). N-linked (GlcNAc...) asparagine glycans are attached at residues asparagine 361, asparagine 385, and asparagine 419. Disulfide bonds link cysteine 439/cysteine 444 and cysteine 462/cysteine 469.

This sequence belongs to the glycosyl hydrolase 28 family.

Its subcellular location is the secreted. It carries out the reaction (1,4-alpha-D-galacturonosyl)n+m + H2O = (1,4-alpha-D-galacturonosyl)n + (1,4-alpha-D-galacturonosyl)m.. Functionally, involved in maceration and soft-rotting of plant tissue. Hydrolyzes the 1,4-alpha glycosidic bonds of de-esterified pectate in the smooth region of the plant cell wall. This is Probable endopolygalacturonase D (pgaD) from Neosartorya fischeri (strain ATCC 1020 / DSM 3700 / CBS 544.65 / FGSC A1164 / JCM 1740 / NRRL 181 / WB 181) (Aspergillus fischerianus).